Consider the following 396-residue polypeptide: Elongation factor Tu (396 aa).

Positions 11–205 (KPHVNIGTIG…VIDDYIPTPK (195 aa)) constitute a tr-type G domain. The G1 stretch occupies residues 20 to 27 (GHVDHGKT). 20 to 27 (GHVDHGKT) provides a ligand contact to GTP. Residue threonine 27 coordinates Mg(2+). Residues 61 to 65 (GITIN) are G2. A G3 region spans residues 82–85 (DAPG). GTP-binding positions include 82 to 86 (DAPGH) and 137 to 140 (NKTD). The G4 stretch occupies residues 137–140 (NKTD). The interval 175–177 (SAL) is G5.

Belongs to the TRAFAC class translation factor GTPase superfamily. Classic translation factor GTPase family. EF-Tu/EF-1A subfamily. As to quaternary structure, monomer.

Its subcellular location is the cytoplasm. It catalyses the reaction GTP + H2O = GDP + phosphate + H(+). In terms of biological role, GTP hydrolase that promotes the GTP-dependent binding of aminoacyl-tRNA to the A-site of ribosomes during protein biosynthesis. The chain is Elongation factor Tu from Limosilactobacillus reuteri (strain DSM 20016) (Lactobacillus reuteri).